The chain runs to 408 residues: Elongation factor Tu, chloroplastic (408 aa).

Residues 10–213 (KPHVNIGTIG…KVDEYIPTPE (204 aa)) form the tr-type G domain. A G1 region spans residues 19–26 (GHVDHGKT). 19–26 (GHVDHGKT) provides a ligand contact to GTP. Mg(2+) is bound at residue T26. The tract at residues 59–63 (GITIN) is G2. The segment at 80–83 (DCPG) is G3. GTP-binding positions include 80–84 (DCPGH) and 135–138 (NKAD). The tract at residues 135–138 (NKAD) is G4. Residues 173–175 (SAL) form a G5 region.

This sequence belongs to the TRAFAC class translation factor GTPase superfamily. Classic translation factor GTPase family. EF-Tu/EF-1A subfamily.

It localises to the plastid. It is found in the chloroplast. The enzyme catalyses GTP + H2O = GDP + phosphate + H(+). GTP hydrolase that promotes the GTP-dependent binding of aminoacyl-tRNA to the A-site of ribosomes during protein biosynthesis. The sequence is that of Elongation factor Tu, chloroplastic (tufA) from Guillardia theta (Cryptophyte).